The sequence spans 106 residues: Large ribosomal subunit protein bL21 (106 aa).

The protein belongs to the bacterial ribosomal protein bL21 family. In terms of assembly, part of the 50S ribosomal subunit. Contacts protein L20.

Functionally, this protein binds to 23S rRNA in the presence of protein L20. The chain is Large ribosomal subunit protein bL21 from Xylella fastidiosa (strain Temecula1 / ATCC 700964).